The following is a 1942-amino-acid chain: GREB1-like protein (1942 aa).

Disordered regions lie at residues S76–G101, P235–T306, M325–W373, and T1123–V1256. Positions E81 to D90 are enriched in acidic residues. A compositionally biased stretch (low complexity) spans S237 to S253. A compositionally biased stretch (polar residues) spans N338–S362. The segment covering T1127–R1155 has biased composition (basic and acidic residues). Low complexity predominate over residues S1158 to T1171. Residues E1172–S1202 show a composition bias toward polar residues. The segment covering S1212–P1248 has biased composition (low complexity). Residues G1861–L1881 traverse the membrane as a helical segment.

The protein belongs to the GREB1 family.

The protein resides in the membrane. In terms of biological role, plays a major role in early metanephros development. This chain is GREB1-like protein (greb1l), found in Danio rerio (Zebrafish).